Here is a 174-residue protein sequence, read N- to C-terminus: ATP synthase subunit delta (174 aa).

The protein belongs to the ATPase delta chain family. In terms of assembly, F-type ATPases have 2 components, F(1) - the catalytic core - and F(0) - the membrane proton channel. F(1) has five subunits: alpha(3), beta(3), gamma(1), delta(1), epsilon(1). F(0) has three main subunits: a(1), b(2) and c(10-14). The alpha and beta chains form an alternating ring which encloses part of the gamma chain. F(1) is attached to F(0) by a central stalk formed by the gamma and epsilon chains, while a peripheral stalk is formed by the delta and b chains.

It is found in the cell inner membrane. Functionally, f(1)F(0) ATP synthase produces ATP from ADP in the presence of a proton or sodium gradient. F-type ATPases consist of two structural domains, F(1) containing the extramembraneous catalytic core and F(0) containing the membrane proton channel, linked together by a central stalk and a peripheral stalk. During catalysis, ATP synthesis in the catalytic domain of F(1) is coupled via a rotary mechanism of the central stalk subunits to proton translocation. In terms of biological role, this protein is part of the stalk that links CF(0) to CF(1). It either transmits conformational changes from CF(0) to CF(1) or is implicated in proton conduction. The protein is ATP synthase subunit delta of Neorickettsia sennetsu (strain ATCC VR-367 / Miyayama) (Ehrlichia sennetsu).